A 555-amino-acid chain; its full sequence is Glucose-6-phosphate isomerase (555 aa).

Glutamate 360 (proton donor) is an active-site residue. Active-site residues include histidine 391 and lysine 519.

The protein belongs to the GPI family.

Its subcellular location is the cytoplasm. The enzyme catalyses alpha-D-glucose 6-phosphate = beta-D-fructose 6-phosphate. Its pathway is carbohydrate biosynthesis; gluconeogenesis. It functions in the pathway carbohydrate degradation; glycolysis; D-glyceraldehyde 3-phosphate and glycerone phosphate from D-glucose: step 2/4. Catalyzes the reversible isomerization of glucose-6-phosphate to fructose-6-phosphate. The chain is Glucose-6-phosphate isomerase from Acinetobacter baumannii (strain AB307-0294).